A 577-amino-acid chain; its full sequence is Moesin (577 aa).

In terms of domain architecture, FERM spans 2-295 (PKTINVRVTT…GNHELYMRRR (294 aa)). Ser74 carries the post-translational modification Phosphoserine. Lys79 carries the post-translational modification N6-acetyllysine. The residue at position 83 (Lys83) is an N6-succinyllysine. The [IL]-x-C-x-x-[DE] motif motif lies at 115–120 (IYCPPE). Tyr116 bears the Phosphotyrosine mark. Cys117 is modified (S-nitrosocysteine). N6-acetyllysine is present on residues Lys139 and Lys165. A compositionally biased stretch (basic and acidic residues) spans 376 to 414 (EQERKRAQSEAEKLAKERQEAEEAKEALLKASRDQKKTQ). Disordered stretches follow at residues 376 to 415 (EQER…KTQE) and 434 to 518 (ARQK…NERV). Ser407 carries the post-translational modification Phosphoserine. A compositionally biased stretch (acidic residues) spans 476–487 (AENDQDEQDENG). Basic and acidic residues predominate over residues 492–518 (ADLRADAMAKDRSEEERTTEAEKNERV). Ser527 carries the phosphoserine modification. Thr558 is modified (phosphothreonine; by ROCK2 and STK10).

Binds NHERF1. In resting T-cells, part of a PAG1-NHERF1-MSN complex which is disrupted upon TCR activation. Interacts with PPP1R16B. Interacts with PDZD8. Interacts with SELPLG and SYK; mediates the activation of SYK by SELPLG. Interacts with PDPN (via cytoplasmic domain); activates RHOA and promotes epithelial-mesenchymal transition. Interacts with SPN/CD43 cytoplasmic tail, CD44 and ICAM2. Post-translationally, phosphorylation on Thr-558 is crucial for the formation of microvilli-like structures. Phosphorylation by ROCK2 suppresses the head-to-tail association of the N-terminal and C-terminal halves resulting in an opened conformation which is capable of actin and membrane-binding. Phosphorylation on Thr-558 by STK10 negatively regulates lymphocyte migration and polarization. In terms of processing, S-nitrosylation of Cys-117 is induced by interferon-gamma and oxidatively-modified low-densitity lipoprotein (LDL(ox)) implicating the iNOS-S100A8/9 transnitrosylase complex.

It localises to the cell membrane. The protein localises to the cytoplasm. It is found in the cytoskeleton. The protein resides in the apical cell membrane. Its subcellular location is the cell projection. It localises to the microvillus membrane. The protein localises to the microvillus. With respect to regulation, a head-to-tail association, of the N-terminal and C-terminal halves results in a closed conformation (inactive form) which is incapable of actin or membrane-binding. Its function is as follows. Probably involved in connections of major cytoskeletal structures to the plasma membrane. Plays a role in regulating the proliferation, migration, and adhesion of human lymphoid cells and participates in immunologic synapse formation. The polypeptide is Moesin (Sus scrofa (Pig)).